A 340-amino-acid polypeptide reads, in one-letter code: Phosphoribosylformylglycinamidine cyclo-ligase (340 aa).

The protein belongs to the AIR synthase family.

The protein localises to the cytoplasm. It carries out the reaction 2-formamido-N(1)-(5-O-phospho-beta-D-ribosyl)acetamidine + ATP = 5-amino-1-(5-phospho-beta-D-ribosyl)imidazole + ADP + phosphate + H(+). The protein operates within purine metabolism; IMP biosynthesis via de novo pathway; 5-amino-1-(5-phospho-D-ribosyl)imidazole from N(2)-formyl-N(1)-(5-phospho-D-ribosyl)glycinamide: step 2/2. This chain is Phosphoribosylformylglycinamidine cyclo-ligase, found in Streptococcus pneumoniae (strain Taiwan19F-14).